Here is a 315-residue protein sequence, read N- to C-terminus: 4-diphosphocytidyl-2-C-methyl-D-erythritol kinase (315 aa).

The active site involves K8. 93-103 provides a ligand contact to ATP; the sequence is PVAAGLAGGSS. D135 is an active-site residue.

The protein belongs to the GHMP kinase family. IspE subfamily.

It catalyses the reaction 4-CDP-2-C-methyl-D-erythritol + ATP = 4-CDP-2-C-methyl-D-erythritol 2-phosphate + ADP + H(+). The protein operates within isoprenoid biosynthesis; isopentenyl diphosphate biosynthesis via DXP pathway; isopentenyl diphosphate from 1-deoxy-D-xylulose 5-phosphate: step 3/6. Functionally, catalyzes the phosphorylation of the position 2 hydroxy group of 4-diphosphocytidyl-2C-methyl-D-erythritol. The sequence is that of 4-diphosphocytidyl-2-C-methyl-D-erythritol kinase from Heliobacterium modesticaldum (strain ATCC 51547 / Ice1).